We begin with the raw amino-acid sequence, 291 residues long: Beta-lactamase OXY-1 (291 aa).

Residues 1 to 24 form the signal peptide; the sequence is MLKSSWRKTALMAAAAVPLLLASG. Residue Ser-73 is the Acyl-ester intermediate of the active site. Substrate is bound at residue 237–239; sequence KTG.

Belongs to the class-A beta-lactamase family.

The catalysed reaction is a beta-lactam + H2O = a substituted beta-amino acid. Hydrolyzes broad-spectrum beta-lactam antibiotics. Active against cephalosporins. The sequence is that of Beta-lactamase OXY-1 (bla) from Klebsiella oxytoca.